The chain runs to 274 residues: 2,3,4,5-tetrahydropyridine-2,6-dicarboxylate N-succinyltransferase (274 aa).

Residues Arg104 and Asp141 each coordinate substrate.

Belongs to the transferase hexapeptide repeat family. In terms of assembly, homotrimer.

It localises to the cytoplasm. It catalyses the reaction (S)-2,3,4,5-tetrahydrodipicolinate + succinyl-CoA + H2O = (S)-2-succinylamino-6-oxoheptanedioate + CoA. The protein operates within amino-acid biosynthesis; L-lysine biosynthesis via DAP pathway; LL-2,6-diaminopimelate from (S)-tetrahydrodipicolinate (succinylase route): step 1/3. The protein is 2,3,4,5-tetrahydropyridine-2,6-dicarboxylate N-succinyltransferase of Shewanella loihica (strain ATCC BAA-1088 / PV-4).